Here is a 164-residue protein sequence, read N- to C-terminus: Transcription elongation factor GreA (164 aa).

A coiled-coil region spans residues 12 to 38 (RRLERELERLKKERPGVILAIKEAREE).

This sequence belongs to the GreA/GreB family.

Functionally, necessary for efficient RNA polymerase transcription elongation past template-encoded arresting sites. The arresting sites in DNA have the property of trapping a certain fraction of elongating RNA polymerases that pass through, resulting in locked ternary complexes. Cleavage of the nascent transcript by cleavage factors such as GreA or GreB allows the resumption of elongation from the new 3'terminus. GreA releases sequences of 2 to 3 nucleotides. In Solidesulfovibrio magneticus (strain ATCC 700980 / DSM 13731 / RS-1) (Desulfovibrio magneticus), this protein is Transcription elongation factor GreA.